The primary structure comprises 188 residues: Elongation factor P (188 aa).

Belongs to the elongation factor P family.

It is found in the cytoplasm. It participates in protein biosynthesis; polypeptide chain elongation. In terms of biological role, involved in peptide bond synthesis. Stimulates efficient translation and peptide-bond synthesis on native or reconstituted 70S ribosomes in vitro. Probably functions indirectly by altering the affinity of the ribosome for aminoacyl-tRNA, thus increasing their reactivity as acceptors for peptidyl transferase. The chain is Elongation factor P from Malacoplasma penetrans (strain HF-2) (Mycoplasma penetrans).